Reading from the N-terminus, the 128-residue chain is Small ribosomal subunit protein uS13 (128 aa).

Positions 95–118 are enriched in basic residues; it reads GLPVRGQRTHTNARTRKGPKKGLV. The disordered stretch occupies residues 95–128; that stretch reads GLPVRGQRTHTNARTRKGPKKGLVRKAAAPAPMA.

This sequence belongs to the universal ribosomal protein uS13 family. As to quaternary structure, part of the 30S ribosomal subunit. Forms a loose heterodimer with protein S19. Forms two bridges to the 50S subunit in the 70S ribosome.

Located at the top of the head of the 30S subunit, it contacts several helices of the 16S rRNA. In the 70S ribosome it contacts the 23S rRNA (bridge B1a) and protein L5 of the 50S subunit (bridge B1b), connecting the 2 subunits; these bridges are implicated in subunit movement. Contacts the tRNAs in the A and P-sites. The chain is Small ribosomal subunit protein uS13 from Anaeromyxobacter dehalogenans (strain 2CP-1 / ATCC BAA-258).